Consider the following 576-residue polypeptide: Cilia- and flagella-associated protein 100 (576 aa).

The segment at 1–29 (MPIYDEASVPGTAAGRSTTDVGATAGANP) is disordered. 3 coiled-coil regions span residues 125-226 (IFLL…CRRY), 254-311 (VAEW…IMKE), and 342-408 (YKQL…LKDR). Disordered regions lie at residues 417-439 (TLSM…PGGP), 495-519 (AEKA…HREH), and 538-563 (TGKP…RNDE).

This sequence belongs to the CFAP100 family. In terms of assembly, interacts with FAP73; form the modifier of inner arm (MIA) complex.

Its subcellular location is the cytoplasm. It is found in the cytoskeleton. The protein resides in the flagellum axoneme. In terms of biological role, as part of MIA, a complex associated with the outer doublet microtubules of the axoneme, may play a role in ciliary/flagellar motility by regulating the assembly and the activity of axonemal inner dynein arm. This Chlamydomonas reinhardtii (Chlamydomonas smithii) protein is Cilia- and flagella-associated protein 100.